We begin with the raw amino-acid sequence, 416 residues long: 3-hydroxy-3-methylglutaryl coenzyme A reductase AN1593 (416 aa).

E103 serves as the catalytic Charge relay system. Residue N167 is glycosylated (N-linked (GlcNAc...) asparagine). K236 serves as the catalytic Charge relay system. A glycan (N-linked (GlcNAc...) asparagine) is linked at N277. D312 functions as the Charge relay system in the catalytic mechanism. The chain crosses the membrane as a helical span at residues 380–400 (LALLVAAGVLAGELSLCSALS). H408 acts as the Proton donor in catalysis.

This sequence belongs to the HMG-CoA reductase family.

The protein resides in the membrane. It carries out the reaction (R)-mevalonate + 2 NADP(+) + CoA = (3S)-3-hydroxy-3-methylglutaryl-CoA + 2 NADPH + 2 H(+). Its pathway is metabolic intermediate biosynthesis; (R)-mevalonate biosynthesis; (R)-mevalonate from acetyl-CoA: step 3/3. Its function is as follows. 3-hydroxy-3-methylglutaryl coenzyme A reductase; part of the gene cluster that mediates the biosynthesis of the diterpene ent-pimara-8(14),15-diene (PD). Within the cluster, the HMG-CoA reductase AN1593 functions in the mevalonate pathway, which produces isoprenoid precursors. The geranylgeranyl pyrophosphate (GGPP) synthase AN1592 is needed in the formation of GGPP, the precursor for diterpenes. Lastly, the pimaradiene synthase pbcA performs the 2 cyclization steps that convert GGPP to ent-pimara-8(14),15-diene. The putative roles of the remaining cluster enzymes in ent-pimara-8(14),15-diene biosynthesis is unclear. The cytochrome P450 monooxygenase AN1598, the glutathione S-transferase AN1595, the oxidoreductases AN1596 and AN1597 probably function as decorative enzymes. It is possible that in biological conditions the compound is oxidized to ent-pimara-8(14),15-dien-19-oic acid, which is a bioactive diterpene compound predominant in many plant extracts. This Emericella nidulans (strain FGSC A4 / ATCC 38163 / CBS 112.46 / NRRL 194 / M139) (Aspergillus nidulans) protein is 3-hydroxy-3-methylglutaryl coenzyme A reductase AN1593.